Consider the following 466-residue polypeptide: 3-isopropylmalate dehydratase large subunit (466 aa).

Cys347, Cys407, and Cys410 together coordinate [4Fe-4S] cluster.

The protein belongs to the aconitase/IPM isomerase family. LeuC type 1 subfamily. Heterodimer of LeuC and LeuD. It depends on [4Fe-4S] cluster as a cofactor.

The catalysed reaction is (2R,3S)-3-isopropylmalate = (2S)-2-isopropylmalate. It functions in the pathway amino-acid biosynthesis; L-leucine biosynthesis; L-leucine from 3-methyl-2-oxobutanoate: step 2/4. In terms of biological role, catalyzes the isomerization between 2-isopropylmalate and 3-isopropylmalate, via the formation of 2-isopropylmaleate. The chain is 3-isopropylmalate dehydratase large subunit from Salmonella paratyphi A (strain ATCC 9150 / SARB42).